A 516-amino-acid chain; its full sequence is Rho guanine nucleotide exchange factor 9 (516 aa).

Positions 8–67 (DSIVSAEAVWDHVTMANRELAFKAGDVIKVLDASNKDWWWGQIDDEEGWFPASFVRLWVN) constitute an SH3 domain. An interaction with GPHN region spans residues 100 to 110 (RDQMRANVINE). In terms of domain architecture, DH spans 103 to 287 (MRANVINEIM…RNVTQQINER (185 aa)). The PH domain maps to 318–425 (ELIYTGEMAW…WLRAFREERK (108 aa)). Residues 453 to 480 (PKQKGVNSARSVPPSYPPPQDPLNHGQY) are disordered. Ser502 carries the phosphoserine modification.

As to quaternary structure, interacts with GPHN. In terms of tissue distribution, detected in brain. Detected at low levels in heart.

Its subcellular location is the cytoplasm. It is found in the postsynaptic density. Its function is as follows. Acts as a guanine nucleotide exchange factor (GEF) for CDC42. Promotes formation of GPHN clusters. The protein is Rho guanine nucleotide exchange factor 9 (ARHGEF9) of Homo sapiens (Human).